The following is a 210-amino-acid chain: Pyridoxine/pyridoxamine 5'-phosphate oxidase (210 aa).

Residues 7–10 (RDEY) and Lys65 each bind substrate. FMN-binding positions include 60–65 (RMVLLK), 75–76 (FT), Arg81, Lys82, and Gln104. Positions 122, 126, and 130 each coordinate substrate. FMN contacts are provided by residues 139-140 (QS) and Trp183. Residue 189 to 191 (RLH) coordinates substrate. FMN is bound at residue Arg193.

This sequence belongs to the pyridoxamine 5'-phosphate oxidase family. As to quaternary structure, homodimer. FMN is required as a cofactor.

The enzyme catalyses pyridoxamine 5'-phosphate + O2 + H2O = pyridoxal 5'-phosphate + H2O2 + NH4(+). The catalysed reaction is pyridoxine 5'-phosphate + O2 = pyridoxal 5'-phosphate + H2O2. It participates in cofactor metabolism; pyridoxal 5'-phosphate salvage; pyridoxal 5'-phosphate from pyridoxamine 5'-phosphate: step 1/1. It functions in the pathway cofactor metabolism; pyridoxal 5'-phosphate salvage; pyridoxal 5'-phosphate from pyridoxine 5'-phosphate: step 1/1. Functionally, catalyzes the oxidation of either pyridoxine 5'-phosphate (PNP) or pyridoxamine 5'-phosphate (PMP) into pyridoxal 5'-phosphate (PLP). The chain is Pyridoxine/pyridoxamine 5'-phosphate oxidase from Haemophilus influenzae (strain 86-028NP).